A 429-amino-acid polypeptide reads, in one-letter code: Enolase (429 aa).

Gln-162 contacts (2R)-2-phosphoglycerate. The active-site Proton donor is the Glu-204. Positions 241, 283, and 310 each coordinate Mg(2+). (2R)-2-phosphoglycerate-binding residues include Lys-335, Arg-364, Ser-365, and Lys-386. The active-site Proton acceptor is Lys-335.

This sequence belongs to the enolase family. The cofactor is Mg(2+).

The protein localises to the cytoplasm. It is found in the secreted. It localises to the cell surface. The catalysed reaction is (2R)-2-phosphoglycerate = phosphoenolpyruvate + H2O. The protein operates within carbohydrate degradation; glycolysis; pyruvate from D-glyceraldehyde 3-phosphate: step 4/5. Its function is as follows. Catalyzes the reversible conversion of 2-phosphoglycerate (2-PG) into phosphoenolpyruvate (PEP). It is essential for the degradation of carbohydrates via glycolysis. The chain is Enolase from Mycobacterium sp. (strain JLS).